A 1017-amino-acid chain; its full sequence is Anaphase-promoting complex subunit 5 (1017 aa).

TPR repeat units follow at residues 30 to 63, 182 to 214, 252 to 286, 337 to 370, and 508 to 541; these read KQSLSHLLIRHIKENNYQDTVKEVSLYDFIEKEL, DMSMDQEQQQQQQEDYNEISNYENKIKFLSPLD, VKRVHLISLLFNIGYQDYDQSLEDLHRYFDYVNGQ, PYAVLNLVRLHYHFGHYEESYLALREAIRIAQER, and NNNNNNNNNNNSSNSNNNGGVNMFGKSFHLWNDI. Residues 451-525 are compositionally biased toward low complexity; that stretch reads INSNNYNSNN…NNNSSNSNNN (75 aa). Disordered regions lie at residues 451–527 and 617–636; these read INSN…NNGG and NNNNNNNNNNNQIKQQQQQN. TPR repeat units follow at residues 642–675, 756–790, 838–871, 876–908, and 931–964; these read LLSFCKLALLYSKKSKYNEAIQILIKCFSIYKTQ, VICYQKIIKYYCNVRGMYEKSMNLIVKGIQISRDF, ADSNIALIKIHLSTDRLDKAITLIKETLPMVLSD, SQLYLLWAKSLISTSTKQSIDYLNRSEQLFLQL, and KEIYYLKSIIYNDLGDIENRNLYAKKFKSILVPS.

Belongs to the APC5 family. The APC/C is composed of at least 13 subunits that stay tightly associated throughout the cell cycle: anapc1, anapc2, anapc3, anapc4, anapc5, anapc6, anapc7, anapc8, anapc10, anapc11, cdc20, cdc26 and cdh1.

The protein resides in the nucleus. It participates in protein modification; protein ubiquitination. Component of the anaphase promoting complex/cyclosome (APC/C), a cell cycle-regulated E3 ubiquitin-protein ligase complex that controls progression through mitosis and the G1 phase of the cell cycle. The sequence is that of Anaphase-promoting complex subunit 5 (anapc5) from Dictyostelium discoideum (Social amoeba).